The following is a 300-amino-acid chain: 4-diphosphocytidyl-2-C-methyl-D-erythritol kinase (300 aa).

Lys-12 is an active-site residue. 94–104 contributes to the ATP binding site; sequence PAQAGIGGGSS. Asp-136 is a catalytic residue.

Belongs to the GHMP kinase family. IspE subfamily.

It catalyses the reaction 4-CDP-2-C-methyl-D-erythritol + ATP = 4-CDP-2-C-methyl-D-erythritol 2-phosphate + ADP + H(+). It participates in isoprenoid biosynthesis; isopentenyl diphosphate biosynthesis via DXP pathway; isopentenyl diphosphate from 1-deoxy-D-xylulose 5-phosphate: step 3/6. Its function is as follows. Catalyzes the phosphorylation of the position 2 hydroxy group of 4-diphosphocytidyl-2C-methyl-D-erythritol. This Verminephrobacter eiseniae (strain EF01-2) protein is 4-diphosphocytidyl-2-C-methyl-D-erythritol kinase.